The chain runs to 638 residues: MTHMPETPLLDQVHYPSDLRKLEDRDLPQLAREVRDEMIDAVSRTGGHLGAGLGVVELTIAIHNVFDTPNDRLIFDVGHQCYPHKILTGRRDRIRTLRQEGGISGFTRRAESEYDPFGAAHSSTSISAGLGMAVAADLDKTDRRVIAVIGDGAMSAGMAYEALNNAGALDARLIVILNDNDMSIAPPTGAMSAYLARLASGRTYMGFRDLGKKLTAYLGKNVDRAITRAVEHARGYVTGGTMFEEMGFYHIGPIDGHSFDHLLPVLRNVRDNAQGPVLIHVVTQKGKGYAPAEAAADKYHGVNKFDVITGAQAKVKPNAPSYTSVFADALVQEATFDDKIVGITAAMPSGTGLDKLQEVFPKRCFDVGIAEQHAVTFAAGLAAEGFKPFAALYSTFLQRAYDQVVHDVAIQGLPVRFPIDRAGFVGADGPTHAGSFDTTFLATLPGFVVMAAADEAELKHMVRTAAAYDLGPISFRYPRGEGVGIEMPERGQILEIGKGRIVKQGSKVALLSFGTRLADSLAAAEDLDAAGLPTTVADARFAKPLDHDLIRQLASHHEVLITIEEGSVGGFGSQVMQFLASEGLLDNGLKIRTLVMPDIWVEQAKPEVMNAMAGLDRAGIVQTVFKALGRSLIVGAAG.

Thiamine diphosphate-binding positions include H79 and 120-122 (AHS). Residue D151 coordinates Mg(2+). Residues 152–153 (GA), N180, Y289, and E371 contribute to the thiamine diphosphate site. N180 lines the Mg(2+) pocket.

It belongs to the transketolase family. DXPS subfamily. As to quaternary structure, homodimer. The cofactor is Mg(2+). It depends on thiamine diphosphate as a cofactor.

The enzyme catalyses D-glyceraldehyde 3-phosphate + pyruvate + H(+) = 1-deoxy-D-xylulose 5-phosphate + CO2. The protein operates within metabolic intermediate biosynthesis; 1-deoxy-D-xylulose 5-phosphate biosynthesis; 1-deoxy-D-xylulose 5-phosphate from D-glyceraldehyde 3-phosphate and pyruvate: step 1/1. In terms of biological role, catalyzes the acyloin condensation reaction between C atoms 2 and 3 of pyruvate and glyceraldehyde 3-phosphate to yield 1-deoxy-D-xylulose-5-phosphate (DXP). The polypeptide is 1-deoxy-D-xylulose-5-phosphate synthase (Rhizobium rhizogenes (strain K84 / ATCC BAA-868) (Agrobacterium radiobacter)).